A 107-amino-acid polypeptide reads, in one-letter code: uncharacterized protein (107 aa).

It belongs to the HesB/IscA family.

This is an uncharacterized protein from Azotobacter vinelandii.